Here is a 757-residue protein sequence, read N- to C-terminus: MDVNPTLLFLKVPAQNAISTTFPYTGDPPYSHGTGTGYTMDTVNRTHQYSEKGKWTTNTETGAPQLNPIDGPLPEDNEPSGYAQTDCVLEAMAFLEESHPGIFENSCLETMEIVQQTRVDKLTQGRQTYDWTLNRNQPAATALANTIEIFRSNGLTANESGRLIDFLKDVMESMDKEEMEITTHFQRKRRVRDNMTKKMVTQRTIGKKKQRLNKKSYLIRALTLNTMTKDAERGKLKRRAIATPGMQIRGFVYFVETLARSICEKLEQSGLPVGGNEKKAKLANVVRKMMTNSQDTELSFTITGDNTKWNENQNPRMFLAMITYITRNQPEWFRNVLSIAPIMFSNKMARLGKGYMFESKSMKLRTQIPAEMLANIDLKYFNESTRKKIEKIRPLLIDGTASLSPGMMMGMFNMLSTVLGVSILNLGQKRYTKTTYWWDGLQSSDDFALIVNAPNHEGIQAGVDRFYRTCKLVGINMSKKKSYINRTGTFEFTSFFYRYGFVANFSMELPSFGVSGINESADMSIGVTVIKNNMINNDLGPATAQMALQLFIKDYRYTYRCHRGDTQIQTRRSFELKKLWEQTRSKAGLLVSDGGPNLYNIRNLHIPEVCLKWELMDEDYQGRLCNPLNPFVSHKEIESVNNAVVMPAHGPAKSVEYDAVATTHSWIPKRNRSILNTSQRGILEDEQMYQKCCNLFEKFFPSSSYRRPVGISSMVEAMVSRARIDARIDFESGRIKKEEFAEIMKICSTIEELRRQK.

The tract at residues 50–82 is disordered; that stretch reads SEKGKWTTNTETGAPQLNPIDGPLPEDNEPSGY. A compositionally biased stretch (polar residues) spans 55 to 64; sequence WTTNTETGAP. Short sequence motifs (nuclear localization signal) lie at residues 187-195 and 203-216; these read RKRRVRDNM and RTIGKKKQRLNKKS. Residues 249–256 are promoter-binding site; sequence RGFVYFVE. Residues 286-483 enclose the RdRp catalytic domain; it reads VRKMMTNSQD…GINMSKKKSY (198 aa).

This sequence belongs to the influenza viruses polymerase PB1 family. Influenza RNA polymerase is composed of three subunits: PB1, PB2 and PA. Interacts (via N-terminus) with PA (via C-terminus). Interacts (via C-terminus) with PB2 (via N-terminus); this interaction is essential for transcription initiation. Post-translationally, phosphorylated by host PRKCA.

Its subcellular location is the host nucleus. The protein localises to the host cytoplasm. It carries out the reaction RNA(n) + a ribonucleoside 5'-triphosphate = RNA(n+1) + diphosphate. Functionally, RNA-dependent RNA polymerase which is responsible for replication and transcription of virus RNA segments. The transcription of viral mRNAs occurs by a unique mechanism called cap-snatching. 5' methylated caps of cellular mRNAs are cleaved after 10-13 nucleotides by PA. In turn, these short capped RNAs are used as primers by PB1 for transcription of viral mRNAs. During virus replication, PB1 initiates RNA synthesis and copy vRNA into complementary RNA (cRNA) which in turn serves as a template for the production of more vRNAs. The protein is RNA-directed RNA polymerase catalytic subunit of Influenza A virus (strain A/Silky Chicken/Hong Kong/SF189/2001 H5N1 genotype A).